Reading from the N-terminus, the 426-residue chain is PHD finger-containing protein 6 (426 aa).

The segment at 9–59 (RSICETCGHQGWKNSLVTCSKCRIACEHCYCMRESSFETSIHFVCADCSMR) adopts a PHD-type zinc-finger fold. 8 residues coordinate Zn(2+): Cys12, Cys15, Cys27, Cys30, His36, Cys39, Cys53, and Cys56. 2 disordered regions span residues 122–144 (TFRV…TAGF) and 185–205 (RQAS…GDGA).

In terms of assembly, interacts directly with AIPP3/BDT1.

Together with AIPP3/BDT1, cooperates to form a BAH-PHD bivalent histone reader complex able to read histone H3 lysine 27 trimethylation (H3K27me3) histone marks in order to regulate transcription, especially to prevent early flowering; promotes AIPP3/BDT1 binding to H3K27me3. This chain is PHD finger-containing protein 6, found in Arabidopsis thaliana (Mouse-ear cress).